The following is a 370-amino-acid chain: Flagellar P-ring protein (370 aa).

Positions 1–24 are cleaved as a signal peptide; that stretch reads MTLSKWILSFGLSVCLIVSHPVSA.

It belongs to the FlgI family. The basal body constitutes a major portion of the flagellar organelle and consists of four rings (L,P,S, and M) mounted on a central rod.

It localises to the periplasm. It is found in the bacterial flagellum basal body. Its function is as follows. Assembles around the rod to form the L-ring and probably protects the motor/basal body from shearing forces during rotation. In Nitrosomonas europaea (strain ATCC 19718 / CIP 103999 / KCTC 2705 / NBRC 14298), this protein is Flagellar P-ring protein.